Consider the following 80-residue polypeptide: Serine protease inhibitor Kazal-type 6 (80 aa).

The N-terminal stretch at 1–23 (MKLSGMFLLLSLALFCFLTGVFS) is a signal peptide. A Pyrrolidone carboxylic acid modification is found at Gln24. Positions 24-80 (QGGQVDCGEFQDPKVYCTRESNPHCGSDGQTYGNKCAFCKAIVKSGGKISLKHPGKC) constitute a Kazal-like domain. 3 disulfide bridges follow: Cys30–Cys62, Cys40–Cys59, and Cys48–Cys80.

Its subcellular location is the secreted. Its function is as follows. Serine protease inhibitor selective for kallikreins. Efficiently inhibits KLK4, KLK5, KLK6, KLK7, KLK12, KLK13 and KLK14. Doesn't inhibit KLK8. This is Serine protease inhibitor Kazal-type 6 (SPINK6) from Homo sapiens (Human).